The chain runs to 76 residues: Exodeoxyribonuclease 7 small subunit (76 aa).

It belongs to the XseB family. As to quaternary structure, heterooligomer composed of large and small subunits.

The protein localises to the cytoplasm. It catalyses the reaction Exonucleolytic cleavage in either 5'- to 3'- or 3'- to 5'-direction to yield nucleoside 5'-phosphates.. Functionally, bidirectionally degrades single-stranded DNA into large acid-insoluble oligonucleotides, which are then degraded further into small acid-soluble oligonucleotides. The sequence is that of Exodeoxyribonuclease 7 small subunit from Geobacter sulfurreducens (strain ATCC 51573 / DSM 12127 / PCA).